Reading from the N-terminus, the 166-residue chain is uncharacterized protein (166 aa).

Position 117-124 (117-124 (AAKSGGKT)) interacts with ATP.

This is an uncharacterized protein from Mycoplasma pneumoniae (strain ATCC 29342 / M129 / Subtype 1) (Mycoplasmoides pneumoniae).